The primary structure comprises 493 residues: Tripartite motif-containing protein 5 (493 aa).

Position 2 is an N-acetylalanine (Ala-2). The RING-type zinc-finger motif lies at 15 to 59 (CPICLELLTQPLSLDCGHSFCQACLTANHKKSTLDKGERSCPVCR). The residue at position 86 (Ser-86) is a Phosphoserine. A B box-type zinc finger spans residues 90–132 (QKVDHCARHGEKLLLFCKEDGKVICWLCERSQEHRGHHTFLTE). Zn(2+) is bound by residues Cys-95, His-98, Cys-117, and His-123. The stretch at 131 to 223 (TEEVAQKYQV…LTKSETEMVQ (93 aa)) forms a coiled coil. Residues 185–198 (FEQLRDILDWEESN) are required for interaction with GABARAP and for autophagy. One can recognise a B30.2/SPRY domain in the interval 281-493 (LKGMLEVFRE…VPMTLCSPSS (213 aa)).

It belongs to the TRIM/RBCC family. As to quaternary structure, can form homodimers and homotrimers. In addition to lower-order dimerization, also exhibits a higher-order multimerization and both low- and high-order multimerizations are essential for its restriction activity. Interacts with BTBD1 and BTBD2. Interacts with PSMC4, PSMC5, PSMD7 and HSPA8/HSC70. Interacts (via B30.2/SPRY domain) with HSPA1A/B. Interacts with PSMC2, MAP3K7/TAK1, TAB2 and TAB3. Interacts with SQSTM1. Interacts with TRIM6 and TRIM34. Interacts with ULK1 (phosphorylated form), GABARAP, GABARAPL1, GABARAPL2, MAP1LC3A, MAP1LC3C and BECN1. In terms of processing, degraded in a proteasome-independent fashion in the absence of viral infection but in a proteasome-dependent fashion following exposure to restriction sensitive virus. Post-translationally, autoubiquitinated in a RING finger- and UBE2D2-dependent manner. Monoubiquitinated by TRIM21. Deubiquitinated by Yersinia YopJ. Ubiquitination may not lead to proteasomal degradation.

Its subcellular location is the cytoplasm. The protein localises to the nucleus. It carries out the reaction S-ubiquitinyl-[E2 ubiquitin-conjugating enzyme]-L-cysteine + [acceptor protein]-L-lysine = [E2 ubiquitin-conjugating enzyme]-L-cysteine + N(6)-ubiquitinyl-[acceptor protein]-L-lysine.. Its pathway is protein modification; protein ubiquitination. In terms of biological role, capsid-specific restriction factor that prevents infection from non-host-adapted retroviruses. Blocks viral replication early in the life cycle, after viral entry but before reverse transcription. In addition to acting as a capsid-specific restriction factor, also acts as a pattern recognition receptor that activates innate immune signaling in response to the retroviral capsid lattice. Binding to the viral capsid triggers its E3 ubiquitin ligase activity, and in concert with the heterodimeric ubiquitin conjugating enzyme complex UBE2V1-UBE2N (also known as UBC13-UEV1A complex) generates 'Lys-63'-linked polyubiquitin chains, which in turn are catalysts in the autophosphorylation of the MAP3K7/TAK1 complex (includes TAK1, TAB2, and TAB3). Activation of the MAP3K7/TAK1 complex by autophosphorylation results in the induction and expression of NF-kappa-B and MAPK-responsive inflammatory genes, thereby leading to an innate immune response in the infected cell. Plays a role in regulating autophagy through activation of autophagy regulator BECN1 by causing its dissociation from its inhibitors BCL2 and TAB2. This is Tripartite motif-containing protein 5 (TRIM5) from Pongo pygmaeus (Bornean orangutan).